The sequence spans 133 residues: Small ribosomal subunit protein uS11 (133 aa).

This sequence belongs to the universal ribosomal protein uS11 family. Part of the 30S ribosomal subunit. Interacts with proteins S7 and S18. Binds to IF-3.

Functionally, located on the platform of the 30S subunit, it bridges several disparate RNA helices of the 16S rRNA. Forms part of the Shine-Dalgarno cleft in the 70S ribosome. This Christiangramia forsetii (strain DSM 17595 / CGMCC 1.15422 / KT0803) (Gramella forsetii) protein is Small ribosomal subunit protein uS11.